The primary structure comprises 210 residues: SAP domain-containing ribonucleoprotein (210 aa).

At Ala-2 the chain carries N-acetylalanine. The region spanning Leu-8–Leu-42 is the SAP domain. At Lys-10 the chain carries N6-acetyllysine. Positions His-45–Glu-64 are enriched in acidic residues. The interval His-45–Ala-86 is disordered. Over residues Thr-65–Ala-86 the composition is skewed to basic and acidic residues. Position 142 is an N6-acetyllysine (Lys-142). A disordered region spans residues Val-161–Ala-210. At Ser-163 the chain carries Phosphoserine. Positions Val-184 to Thr-193 are enriched in polar residues.

It belongs to the SAP domain-containing ribonucleoprotein family. Interacts with DDX39A. Interacts with FUS. Interacts (via the C-terminal domain) with DDX39B; the interaction is direct and facilitates RNA binding of DDX39B. Component of the transcription/export (TREX) complex at least composed of ALYREF/THOC4, DDX39B, SARNP/CIP29, CHTOP and the THO subcomplex; TREX seems to have dynamic structure involving ATP-dependent remodeling; in the complex interacts directly with DDX39B in a ATP-dependent manner which bridges it to ALYREF/THOC4. As to expression, low expression in spleen, liver, pancreas, testis, thymus, heart, and kidney. Increased levels are seen in hepatocellular carcinoma and pancreatic adenocarcinoma.

It localises to the nucleus. The protein localises to the nucleus speckle. Functionally, binds both single-stranded and double-stranded DNA with higher affinity for the single-stranded form. Specifically binds to scaffold/matrix attachment region DNA. Also binds single-stranded RNA. Enhances RNA unwinding activity of DDX39A. May participate in important transcriptional or translational control of cell growth, metabolism and carcinogenesis. Component of the TREX complex which is thought to couple mRNA transcription, processing and nuclear export, and specifically associates with spliced mRNA and not with unspliced pre-mRNA. The TREX complex is recruited to spliced mRNAs by a transcription-independent mechanism, binds to mRNA upstream of the exon-junction complex (EJC) and is recruited in a splicing- and cap-dependent manner to a region near the 5' end of the mRNA where it functions in mRNA export to the cytoplasm via the TAP/NXF1 pathway. Associates with DDX39B, which facilitates RNA binding of DDX39B and likely plays a role in mRNA export. This chain is SAP domain-containing ribonucleoprotein (SARNP), found in Homo sapiens (Human).